Consider the following 136-residue polypeptide: General odorant-binding protein 57d (136 aa).

Positions 1–29 (MPEKMSLRLVPHLACIIFILEIQFRIADS) are cleaved as a signal peptide. 3 disulfides stabilise this stretch: Cys33–Cys70, Cys66–Cys118, and Cys107–Cys127.

Belongs to the PBP/GOBP family.

Its function is as follows. Present in the aqueous fluid surrounding olfactory sensory dendrites and are thought to aid in the capture and transport of hydrophobic odorants into and through this fluid. The protein is General odorant-binding protein 57d of Drosophila melanogaster (Fruit fly).